We begin with the raw amino-acid sequence, 276 residues long: uncharacterized protein (276 aa).

7 helical membrane passes run 5-25, 32-52, 64-84, 104-124, 149-169, 193-213, and 244-264; these read TDLI…GMLA, PLVG…GFVG, GVIL…LLAV, AGLA…GLAL, IAVG…VLLP, LWVT…VMLV, and VGIA…GAFF.

It belongs to the monovalent cation:proton antiporter 2 (CPA2) transporter (TC 2.A.37) family.

The protein localises to the cell membrane. This is an uncharacterized protein from Methylorubrum extorquens (Methylobacterium dichloromethanicum).